Here is a 537-residue protein sequence, read N- to C-terminus: Putative cysteine ligase BshC (537 aa).

The stretch at 422–450 (IEKVEGMIEQQRRLYQDLLDEVAGNQNNI) forms a coiled coil.

Belongs to the BshC family.

Involved in bacillithiol (BSH) biosynthesis. May catalyze the last step of the pathway, the addition of cysteine to glucosamine malate (GlcN-Mal) to generate BSH. The sequence is that of Putative cysteine ligase BshC from Staphylococcus aureus (strain MRSA252).